A 304-amino-acid polypeptide reads, in one-letter code: tRNA dimethylallyltransferase (304 aa).

Residue 8 to 15 participates in ATP binding; the sequence is GPTASGKS. Residue 10 to 15 participates in substrate binding; sequence TASGKS. The segment at 33-36 is interaction with substrate tRNA; sequence DSRQ.

It belongs to the IPP transferase family. Monomer. Mg(2+) serves as cofactor.

It catalyses the reaction adenosine(37) in tRNA + dimethylallyl diphosphate = N(6)-dimethylallyladenosine(37) in tRNA + diphosphate. Catalyzes the transfer of a dimethylallyl group onto the adenine at position 37 in tRNAs that read codons beginning with uridine, leading to the formation of N6-(dimethylallyl)adenosine (i(6)A). The sequence is that of tRNA dimethylallyltransferase from Chlorobium luteolum (strain DSM 273 / BCRC 81028 / 2530) (Pelodictyon luteolum).